The following is a 501-amino-acid chain: UPF0371 protein CD630_08980 (501 aa).

It belongs to the UPF0371 family.

The chain is UPF0371 protein CD630_08980 from Clostridioides difficile (strain 630) (Peptoclostridium difficile).